Here is a 1000-residue protein sequence, read N- to C-terminus: Isoleucine--tRNA ligase, mitochondrial (1000 aa).

Residues 1–27 (MLGAWRAAPRLRLRARFGVASVWARSA) constitute a mitochondrion transit peptide. The 'HIGH' region signature appears at 102 to 112 (PYANGDPHVGH). Residues Lys-649 and Lys-652 each contribute to the ATP site. A 'KMSKS' region motif is present at residues 649–653 (KMSKS).

This sequence belongs to the class-I aminoacyl-tRNA synthetase family.

The protein localises to the mitochondrion matrix. It catalyses the reaction tRNA(Ile) + L-isoleucine + ATP = L-isoleucyl-tRNA(Ile) + AMP + diphosphate. Functionally, aminoacyl-tRNA synthetase that catalyzes the specific attachment of isoleucine to its cognate tRNA (tRNA(Ile)). This Gallus gallus (Chicken) protein is Isoleucine--tRNA ligase, mitochondrial (IARS2).